Reading from the N-terminus, the 310-residue chain is Protease HtpX homolog (310 aa).

The next 2 helical transmembrane spans lie at N16–I36 and I55–I75. Residue H166 coordinates Zn(2+). E167 is an active-site residue. H170 contacts Zn(2+). 2 consecutive transmembrane segments (helical) span residues V182 to G202 and M214 to L234. E239 contributes to the Zn(2+) binding site.

The protein belongs to the peptidase M48B family. Zn(2+) is required as a cofactor.

The protein resides in the cell inner membrane. In Helicobacter pylori (strain J99 / ATCC 700824) (Campylobacter pylori J99), this protein is Protease HtpX homolog.